Reading from the N-terminus, the 425-residue chain is MLDLKRIRTDFDTVAAKLKNRGVSEDTLTHLKELDEKRRTLLVQSEELKAERNIASAAIAQAKRQKEDATQQIADMQKVSADIKTIDNQLVAIDQQVADIITVLPNTPHDSVPVGADEEDNVEIRRWGTPRDFDFEVKAHWDLGEDLDILDWERGAKVTGARFLFYKNLGARLERALYNFMLDEHIKEGYQEIITPYMVNHDSMFGTGQYPKFKEDTFELADTNFVLIPTAEVPLTNYYRGEILDGKELPIYFTAMSPSFRSEAGSAGRDTRGLIRLHQFHKVEMVKFAKPEESYQELEKMTANAENILQKLGLPYRVISLCTGDMGFSAAKTYDLEVWIPAQNTYREISSCSNTEDFQARRAQIRYRDEADGKVKLLHTLNGSGLAVGRTVAAILENYQNEDGSVTIPEVLRPYMGGETVISPK.

230–232 (TAE) provides a ligand contact to L-serine. Residue 261-263 (RSE) coordinates ATP. E284 contacts L-serine. 348–351 (EISS) is a binding site for ATP. S384 provides a ligand contact to L-serine.

Belongs to the class-II aminoacyl-tRNA synthetase family. Type-1 seryl-tRNA synthetase subfamily. As to quaternary structure, homodimer. The tRNA molecule binds across the dimer.

Its subcellular location is the cytoplasm. It carries out the reaction tRNA(Ser) + L-serine + ATP = L-seryl-tRNA(Ser) + AMP + diphosphate + H(+). The catalysed reaction is tRNA(Sec) + L-serine + ATP = L-seryl-tRNA(Sec) + AMP + diphosphate + H(+). The protein operates within aminoacyl-tRNA biosynthesis; selenocysteinyl-tRNA(Sec) biosynthesis; L-seryl-tRNA(Sec) from L-serine and tRNA(Sec): step 1/1. Its function is as follows. Catalyzes the attachment of serine to tRNA(Ser). Is also able to aminoacylate tRNA(Sec) with serine, to form the misacylated tRNA L-seryl-tRNA(Sec), which will be further converted into selenocysteinyl-tRNA(Sec). The polypeptide is Serine--tRNA ligase (Streptococcus pyogenes serotype M6 (strain ATCC BAA-946 / MGAS10394)).